Here is a 93-residue protein sequence, read N- to C-terminus: Large ribosomal subunit protein uL23cz/uL23cy (93 aa).

Belongs to the universal ribosomal protein uL23 family. Part of the 50S ribosomal subunit.

It localises to the plastid. Its subcellular location is the chloroplast. Functionally, binds to 23S rRNA. The chain is Large ribosomal subunit protein uL23cz/uL23cy (rpl23-A) from Citrus sinensis (Sweet orange).